We begin with the raw amino-acid sequence, 256 residues long: Reaction center protein M chain (256 aa).

The next 3 helical transmembrane spans lie at 52–78 (PGVA…LASV), 110–139 (EGGW…ARAL), and 142–167 (GTHM…PLLL). Residues histidine 181 and histidine 201 each contribute to the (7R,8Z)-bacteriochlorophyll b site. A helical transmembrane segment spans residues 197-225 (YNPFHMLSIAFLYGSAVLFAMHGATILAV). Fe cation is bound by residues histidine 218 and glutamate 233. Tryptophan 251 is a binding site for a ubiquinone.

Belongs to the reaction center PufL/M/PsbA/D family. Reaction center is composed of four bacteriochlorophylls, two bacteriopheophytins, two ubiquinones, one iron, and two highly hydrophobic polypeptide chains (designated L and M).

The protein localises to the cellular chromatophore membrane. The reaction center is a membrane-bound complex that mediates the initial photochemical event in the electron transfer process of photosynthesis. In Pararhodospirillum photometricum (Rhodospirillum photometricum), this protein is Reaction center protein M chain (pufM).